We begin with the raw amino-acid sequence, 960 residues long: Cyclin-dependent kinase-like 5 (960 aa).

A Protein kinase domain is found at 13-297; it reads FEILGVVGEG…TEQCLNHPTF (285 aa). Residues 19 to 27 and K42 contribute to the ATP site; that span reads VGEGAYGVV. D135 acts as the Proton acceptor in catalysis. Disordered stretches follow at residues 300-349, 382-566, 646-834, and 848-960; these read QRLL…IQNL, KTYQ…RHSK, SPQP…TQSQ, and ASNH…ETAL. 2 stretches are compositionally biased toward polar residues: residues 319-336 and 382-402; these read ESST…TALQ and KTYQ…NNNI. At S407 the chain carries Phosphoserine. The span at 407–417 shows a compositional bias: basic and acidic residues; it reads SPKEAKSKTEF. 3 stretches are compositionally biased toward polar residues: residues 434-462, 473-482, and 510-548; these read LKSN…QPNE, IPQSSRSPSY, and EPST…SGRN. A Phosphoserine modification is found at S479. 2 stretches are compositionally biased toward basic and acidic residues: residues 549–559 and 679–704; these read NRNEGTLDSRR and QKSE…RHLY. S720 carries the phosphoserine modification. Positions 728–748 are enriched in polar residues; the sequence is HENNVSTRVSSLPSESSSGTN. S761 is modified (phosphoserine). Over residues 769-778 the composition is skewed to basic and acidic residues; sequence EQLKEKEKQG. The span at 791–816 shows a compositional bias: polar residues; it reads QTVPNSDSPDLLTLQKSIHSASTPSS. Residues 817–827 show a composition bias toward basic and acidic residues; the sequence is RPKEWRPEKIS. Polar residues-rich tracts occupy residues 862 to 872, 880 to 890, and 914 to 928; these read LTAQQTKNSFS, SQASGGSSNIR, and SSVT…SYSE.

The protein belongs to the protein kinase superfamily. CMGC Ser/Thr protein kinase family. CDC2/CDKX subfamily. In terms of assembly, interacts with MECP2. Post-translationally, autophosphorylated. Expressed in brain, lung, kidney, prostate, ovary, placenta, pancreas and testis. In terms of tissue distribution, predominant transcript in brain.

The protein resides in the nucleus. It localises to the cytoplasm. It is found in the cytoskeleton. The protein localises to the cilium basal body. Its subcellular location is the microtubule organizing center. The protein resides in the centrosome. It catalyses the reaction L-seryl-[protein] + ATP = O-phospho-L-seryl-[protein] + ADP + H(+). The enzyme catalyses L-threonyl-[protein] + ATP = O-phospho-L-threonyl-[protein] + ADP + H(+). Functionally, mediates phosphorylation of MECP2. May regulate ciliogenesis. This Homo sapiens (Human) protein is Cyclin-dependent kinase-like 5.